Here is a 318-residue protein sequence, read N- to C-terminus: Ribosomal RNA small subunit methyltransferase H (318 aa).

S-adenosyl-L-methionine is bound by residues 38–40 (GGH), D58, Y86, D107, and Q114.

This sequence belongs to the methyltransferase superfamily. RsmH family.

It localises to the cytoplasm. The enzyme catalyses cytidine(1402) in 16S rRNA + S-adenosyl-L-methionine = N(4)-methylcytidine(1402) in 16S rRNA + S-adenosyl-L-homocysteine + H(+). In terms of biological role, specifically methylates the N4 position of cytidine in position 1402 (C1402) of 16S rRNA. This chain is Ribosomal RNA small subunit methyltransferase H, found in Methylibium petroleiphilum (strain ATCC BAA-1232 / LMG 22953 / PM1).